Reading from the N-terminus, the 433-residue chain is WD repeat domain phosphoinositide-interacting protein 1 (433 aa).

The Nuclear receptor interaction motif lies at 127–132; it reads LLKTLL. WD repeat units lie at residues 136–177 and 180–220; these read RNPH…CECT and AHDS…KLYE. Positions 221 to 224 match the L/FRRG motif motif; it reads FRRG. WD repeat units lie at residues 226–265 and 296–346; these read KRYVNISSLVFSMDSQFLCASSNTETVHVFKLEQLPERSE and DRAF…GGEC.

This sequence belongs to the WD repeat PROPPIN family.

The protein localises to the golgi apparatus. Its subcellular location is the trans-Golgi network. It is found in the endosome. The protein resides in the cytoplasmic vesicle. It localises to the clathrin-coated vesicle. The protein localises to the preautophagosomal structure membrane. Its subcellular location is the cytoplasm. It is found in the cytoskeleton. In terms of biological role, component of the autophagy machinery that controls the major intracellular degradation process by which cytoplasmic materials are packaged into autophagosomes and delivered to lysosomes for degradation. Plays an important role in starvation- and calcium-mediated autophagy, as well as in mitophagy. Functions downstream of the ulk1 and PI3-kinases that produce phosphatidylinositol 3-phosphate (PtdIns3P) on membranes of the endoplasmic reticulum once activated. Binds phosphatidylinositol 3-phosphate (PtdIns3P), and maybe other phosphoinositides including PtdIns3,5P2 and PtdIns5P, and is recruited to phagophore assembly sites at the endoplasmic reticulum membranes. There, it assists wipi2 in the recruitment of atg12-atg5-atg16l1, a complex that directly controls the elongation of the nascent autophagosomal membrane. Together with wdr45/wipi4, promotes atg2 (atg2a or atg2b)-mediated lipid transfer by enhancing atg2-association with phosphatidylinositol 3-monophosphate (PI3P)-containing membranes. The protein is WD repeat domain phosphoinositide-interacting protein 1 (wipi1) of Xenopus laevis (African clawed frog).